Reading from the N-terminus, the 244-residue chain is Probable metallo-hydrolase YhfI (244 aa).

Positions 59, 61, 63, 64, 134, 155, and 211 each coordinate Zn(2+).

This sequence belongs to the metallo-beta-lactamase superfamily. The cofactor is Zn(2+).

The chain is Probable metallo-hydrolase YhfI (yhfI) from Bacillus subtilis (strain 168).